A 423-amino-acid chain; its full sequence is MTESVLDYMTRLGRAAREASRVIGRASTAQKNRALQAAADALDAARAELTAANELDLAAGRANGLEPALLDRLALTPARIDGMITGLRQVASLPDPVGAIRDMSYRPSGIQVGKMRTPLGVIGIIYESRPNVTIDAASLCLKSGNATILRGGSEAIHSNRAIATCIQRGLAEAGLPAAVVQVVETTDREAVGALISMPQFVDVIVPRGGRGLIERISRDARVPVIKHLDGICHVYVSQHADLDKAWNVAFNAKTYRYGICGAMETLLVDQRVAERFLPEMARRFQEKGVELRGCERTRALVEAKPATEDDWHTEYLDAILSIRVVNGLDQAIEHINHYGSHHTDSIISEHQGEARQFMAEVDSASVMLNTPTCFADGFEYGLGAEIGISTDKLHARGPVGLEGLTCEKYVVIGDGQLRGQGTC.

This sequence belongs to the gamma-glutamyl phosphate reductase family.

The protein resides in the cytoplasm. The enzyme catalyses L-glutamate 5-semialdehyde + phosphate + NADP(+) = L-glutamyl 5-phosphate + NADPH + H(+). It participates in amino-acid biosynthesis; L-proline biosynthesis; L-glutamate 5-semialdehyde from L-glutamate: step 2/2. In terms of biological role, catalyzes the NADPH-dependent reduction of L-glutamate 5-phosphate into L-glutamate 5-semialdehyde and phosphate. The product spontaneously undergoes cyclization to form 1-pyrroline-5-carboxylate. This is Gamma-glutamyl phosphate reductase from Pseudomonas putida (strain GB-1).